A 209-amino-acid chain; its full sequence is Ribosomal RNA large subunit methyltransferase E (209 aa).

S-adenosyl-L-methionine is bound by residues Gly-63, Trp-65, Asp-83, Asp-99, and Asp-124. Lys-164 (proton acceptor) is an active-site residue.

The protein belongs to the class I-like SAM-binding methyltransferase superfamily. RNA methyltransferase RlmE family.

It localises to the cytoplasm. The enzyme catalyses uridine(2552) in 23S rRNA + S-adenosyl-L-methionine = 2'-O-methyluridine(2552) in 23S rRNA + S-adenosyl-L-homocysteine + H(+). Functionally, specifically methylates the uridine in position 2552 of 23S rRNA at the 2'-O position of the ribose in the fully assembled 50S ribosomal subunit. The sequence is that of Ribosomal RNA large subunit methyltransferase E from Shewanella baltica (strain OS223).